The primary structure comprises 602 residues: Raftlin (602 aa).

Glycine 2 carries the N-myristoyl glycine lipid modification. Residue cysteine 3 is the site of S-palmitoyl cysteine attachment. A compositionally biased stretch (polar residues) spans threonine 178–asparagine 195. Disordered stretches follow at residues threonine 178 to lysine 282, lysine 451 to glutamate 495, and asparagine 524 to proline 567. 2 stretches are compositionally biased toward basic and acidic residues: residues proline 197–aspartate 209 and proline 244–proline 265. Residues lysine 468 to lysine 477 show a composition bias toward basic residues.

It belongs to the raftlin family.

It is found in the cell membrane. In terms of biological role, may play a pivotal role in the formation and/or maintenance of lipid rafts. May regulate B-cell antigen receptor-mediated signaling. The protein is Raftlin (RFTN1) of Gallus gallus (Chicken).